The sequence spans 447 residues: MHHRKYFGTDGIRGKVGDMPITPDFFLKLGWAAGKILARQDSRKIIIGKDTRISGYMLESALEAGLAAAGFSALLTGPMPTPAIAYLTRTFRAEAGIVISASHNPFYDNGIKFFDINGSKLSDSLEEAIEAQLEKPLTCVESAQLGKARRIVDAAGRYIEFCKGTFPSEFNLKNFKIVVDCSNGATYHIAPSVLKELGATVISIACEPNGLNINKECGATNIGMLQKSVLAEQADLGIALDGDGDRLIMVDHLGNKVDGDQIVYLIAKEACRQQQLKGGVVGTLMSNMGLELALQRLKIPFIRAKVGDRYVLEKMQKHGYRIGAENSGHIILLDKTTTGDGMIAALQVFKVIIQNQMTLHELCSEIKLLPQVLVNFSFSGNKNVLQSDAIASLVKKVESTLAGRGRILLRTSGTEPVIRVMIEADQEEHFIKTLAEEVAEKIKKSLY.

S102 functions as the Phosphoserine intermediate in the catalytic mechanism. Mg(2+) is bound by residues S102, D241, D243, and D245. The residue at position 102 (S102) is a Phosphoserine.

It belongs to the phosphohexose mutase family. Mg(2+) is required as a cofactor. Activated by phosphorylation.

It carries out the reaction alpha-D-glucosamine 1-phosphate = D-glucosamine 6-phosphate. Catalyzes the conversion of glucosamine-6-phosphate to glucosamine-1-phosphate. This Hamiltonella defensa subsp. Acyrthosiphon pisum (strain 5AT) protein is Phosphoglucosamine mutase.